The following is a 115-amino-acid chain: Large ribosomal subunit protein eL36 (115 aa).

Belongs to the eukaryotic ribosomal protein eL36 family. Component of the large ribosomal subunit.

It is found in the cytoplasm. The protein localises to the cytosol. Functionally, component of the large ribosomal subunit. The protein is Large ribosomal subunit protein eL36 (RpL36) of Drosophila melanogaster (Fruit fly).